The sequence spans 99 residues: RNA-binding protein Hfq (99 aa).

Residues 9–68 (DPFLNALRRERVPVSIYLVNGIKLQGQIESFDQFVILLKNTVSQMVYKHAISTVVPSRPV) form the Sm domain. The segment at 64 to 99 (PSRPVSHHSNNPGGSNNYHGSNTTAQQQSQDADDAE) is disordered. Low complexity predominate over residues 70-93 (HHSNNPGGSNNYHGSNTTAQQQSQ).

The protein belongs to the Hfq family. Homohexamer.

Its function is as follows. RNA chaperone that binds small regulatory RNA (sRNAs) and mRNAs to facilitate mRNA translational regulation in response to envelope stress, environmental stress and changes in metabolite concentrations. Also binds with high specificity to tRNAs. This Pectobacterium atrosepticum (strain SCRI 1043 / ATCC BAA-672) (Erwinia carotovora subsp. atroseptica) protein is RNA-binding protein Hfq.